The following is a 400-amino-acid chain: Elongation factor Tu (400 aa).

A tr-type G domain is found at 10 to 210 (KPHINVGTIG…ALDEYIPEPK (201 aa)). The tract at residues 19 to 26 (GHVDHGKT) is G1. 19 to 26 (GHVDHGKT) lines the GTP pocket. Threonine 26 provides a ligand contact to Mg(2+). The tract at residues 64 to 68 (GITIA) is G2. The segment at 85-88 (DCPG) is G3. GTP contacts are provided by residues 85–89 (DCPGH) and 140–143 (NKAD). Positions 140–143 (NKAD) are G4. The interval 178–180 (SAL) is G5.

It belongs to the TRAFAC class translation factor GTPase superfamily. Classic translation factor GTPase family. EF-Tu/EF-1A subfamily. Monomer.

It is found in the cytoplasm. The enzyme catalyses GTP + H2O = GDP + phosphate + H(+). Functionally, GTP hydrolase that promotes the GTP-dependent binding of aminoacyl-tRNA to the A-site of ribosomes during protein biosynthesis. This Rubrobacter xylanophilus (strain DSM 9941 / JCM 11954 / NBRC 16129 / PRD-1) protein is Elongation factor Tu.